We begin with the raw amino-acid sequence, 522 residues long: Peptide chain release factor 3 (522 aa).

In terms of domain architecture, tr-type G spans 10–277 (ASRKTFAIIS…TFVDFAPSPS (268 aa)). GTP-binding positions include 19 to 26 (SHPDAGKT), 87 to 91 (DTPGH), and 141 to 144 (NKMD).

This sequence belongs to the TRAFAC class translation factor GTPase superfamily. Classic translation factor GTPase family. PrfC subfamily.

Its subcellular location is the cytoplasm. Functionally, increases the formation of ribosomal termination complexes and stimulates activities of RF-1 and RF-2. It binds guanine nucleotides and has strong preference for UGA stop codons. It may interact directly with the ribosome. The stimulation of RF-1 and RF-2 is significantly reduced by GTP and GDP, but not by GMP. The chain is Peptide chain release factor 3 from Listeria innocua serovar 6a (strain ATCC BAA-680 / CLIP 11262).